A 320-amino-acid polypeptide reads, in one-letter code: Cytochrome f (320 aa).

A signal peptide spans 1–35 (MQTRNTLSWIKEEITRSISVSLMIYIITWASISNA). Heme contacts are provided by tyrosine 36, cysteine 56, cysteine 59, and histidine 60. A helical transmembrane segment spans residues 286-306 (VQGLLFFLASVVLAQIFLVLK).

The protein belongs to the cytochrome f family. As to quaternary structure, the 4 large subunits of the cytochrome b6-f complex are cytochrome b6, subunit IV (17 kDa polypeptide, petD), cytochrome f and the Rieske protein, while the 4 small subunits are PetG, PetL, PetM and PetN. The complex functions as a dimer. Heme is required as a cofactor.

Its subcellular location is the plastid. It is found in the chloroplast thylakoid membrane. Its function is as follows. Component of the cytochrome b6-f complex, which mediates electron transfer between photosystem II (PSII) and photosystem I (PSI), cyclic electron flow around PSI, and state transitions. In Carica papaya (Papaya), this protein is Cytochrome f.